Consider the following 446-residue polypeptide: Maltoporin (446 aa).

A signal peptide spans 1–25; the sequence is MMITLRKLPLAVAVAAGVMSAQAMA.

This sequence belongs to the porin LamB (TC 1.B.3) family. In terms of assembly, homotrimer formed of three 18-stranded antiparallel beta-barrels, containing three independent channels.

It localises to the cell outer membrane. The enzyme catalyses beta-maltose(in) = beta-maltose(out). Involved in the transport of maltose and maltodextrins. The chain is Maltoporin from Escherichia coli O8 (strain IAI1).